The following is a 142-amino-acid chain: Group IIE secretory phospholipase A2 (142 aa).

Positions 1 to 19 are cleaved as a signal peptide; sequence MKPPIALACLCLLVPLAGG. Ca(2+) is bound by residues Asp41, Gly43, Tyr45, Gly47, and Gly49. 7 disulfide bridges follow: Cys44–Cys135, Cys46–Cys62, Cys61–Cys115, Cys67–Cys142, Cys68–Cys108, Cys77–Cys101, and Cys95–Cys106. The active site involves His65. Asp66 provides a ligand contact to Ca(2+). Asp109 is an active-site residue. Residues Tyr130 and Asn132 each coordinate Ca(2+).

This sequence belongs to the phospholipase A2 family. Ca(2+) is required as a cofactor. As to expression, highly expressed in skin and uterus, and at lower levels in various other tissues. Expressed in hair follicles, specifically localized in companion cells of the outer root sheath and cuticular cells of the inner root sheath in hair follicles during anagen. Expressed in white and brown adipose tissue.

The protein resides in the secreted. It localises to the cytoplasm. The catalysed reaction is a 1,2-diacyl-sn-glycero-3-phosphoethanolamine + H2O = a 1-acyl-sn-glycero-3-phosphoethanolamine + a fatty acid + H(+). It carries out the reaction 1-hexadecanoyl-2-(9Z-octadecenoyl)-sn-glycero-3-phosphoethanolamine + H2O = 1-hexadecanoyl-sn-glycero-3-phosphoethanolamine + (9Z)-octadecenoate + H(+). It catalyses the reaction 1-hexadecanoyl-2-(9Z,12Z-octadecadienoyl)-sn-glycero-3-phosphoethanolamine + H2O = 1-hexadecanoyl-sn-glycero-3-phosphoethanolamine + (9Z,12Z)-octadecadienoate + H(+). The enzyme catalyses 1-hexadecanoyl-2-(5Z,8Z,11Z,14Z-eicosatetraenoyl)-sn-glycero-3-phosphoethanolamine + H2O = 1-hexadecanoyl-sn-glycero-3-phosphoethanolamine + (5Z,8Z,11Z,14Z)-eicosatetraenoate + H(+). The catalysed reaction is 1,2-dihexadecanoyl-sn-glycero-3-phospho-(1'-sn-glycerol) + H2O = 1-hexadecanoyl-sn-glycero-3-phospho-(1'-sn-glycerol) + hexadecanoate + H(+). It carries out the reaction 1-hexadecanoyl-2-(9Z-octadecenoyl)-sn-glycero-3-phosphoglycerol + H2O = 1-hexadecanoyl-sn-glycero-3-phosphoglycerol + (9Z)-octadecenoate + H(+). It catalyses the reaction a 1,2-diacyl-sn-glycero-3-phosphocholine + H2O = a 1-acyl-sn-glycero-3-phosphocholine + a fatty acid + H(+). The enzyme catalyses 1,2-dihexadecanoyl-sn-glycero-3-phosphocholine + H2O = 1-hexadecanoyl-sn-glycero-3-phosphocholine + hexadecanoate + H(+). The catalysed reaction is 1-hexadecanoyl-2-(9Z-octadecenoyl)-sn-glycero-3-phosphocholine + H2O = 1-hexadecanoyl-sn-glycero-3-phosphocholine + (9Z)-octadecenoate + H(+). It carries out the reaction 1-hexadecanoyl-2-(9Z,12Z-octadecadienoyl)-sn-glycero-3-phosphocholine + H2O = (9Z,12Z)-octadecadienoate + 1-hexadecanoyl-sn-glycero-3-phosphocholine + H(+). It catalyses the reaction 1-hexadecanoyl-2-(4Z,7Z,10Z,13Z,16Z,19Z-docosahexaenoyl)-sn-glycero-3-phosphocholine + H2O = (4Z,7Z,10Z,13Z,16Z,19Z)-docosahexaenoate + 1-hexadecanoyl-sn-glycero-3-phosphocholine + H(+). Functionally, secretory calcium-dependent phospholipase A2 that primarily targets extracellular phospholipids. Hydrolyzes the ester bond of the fatty acyl group attached at sn-2 position of phospholipids (phospholipase A2 activity), releasing various unsaturated fatty acids including oleoate, linoleoate, arachidonate, docosahexaenoate and lysophosphatidylethanolamines in preference to lysophosphatidylcholines. In response to high-fat diet, hydrolyzes minor lipoprotein phospholipids including phosphatidylserines, phosphatidylinositols and phosphatidylglycerols, altering lipoprotein composition and fat storage in adipose tissue and liver. May act in an autocrine and paracrine manner. Contributes to lipid remodeling of cellular membranes and generation of lipid mediators involved in pathogen clearance. Cleaves sn-2 fatty acyl chains of phosphatidylglycerols and phosphatidylethanolamines, which are major components of membrane phospholipids in bacteria. Acts as a hair follicle phospholipase A2. Selectively releases lysophosphatidylethanolamines (LPE) and various unsaturated fatty acids in skin to regulate hair follicle homeostasis. May regulate the inflammatory response by releasing arachidonate, a precursor of prostaglandins and leukotrienes. Upon allergen exposure, may participate in allergic inflammatory response by enhancing leukotriene C4 synthesis and degranulation in mast cells. The polypeptide is Group IIE secretory phospholipase A2 (Pla2g2e) (Mus musculus (Mouse)).